Here is a 143-residue protein sequence, read N- to C-terminus: Large ribosomal subunit protein uL16 (143 aa).

Over residues 1-17 the composition is skewed to basic residues; sequence MLQPKKTKFRRSQKGRM. Positions 1–25 are disordered; that stretch reads MLQPKKTKFRRSQKGRMKGNAQRGN.

Belongs to the universal ribosomal protein uL16 family. As to quaternary structure, part of the 50S ribosomal subunit.

In terms of biological role, binds 23S rRNA and is also seen to make contacts with the A and possibly P site tRNAs. This is Large ribosomal subunit protein uL16 from Azobacteroides pseudotrichonymphae genomovar. CFP2.